The sequence spans 98 residues: Cell cycle protein GpsB (98 aa).

Positions 34 to 71 (LDLIIKDYEAFQQEIDELRQENARLKRQVEELQKRPAM) form a coiled coil.

It belongs to the GpsB family. Forms polymers through the coiled coil domains. Interacts with PBP1, MreC and EzrA.

The protein resides in the cytoplasm. Divisome component that associates with the complex late in its assembly, after the Z-ring is formed, and is dependent on DivIC and PBP2B for its recruitment to the divisome. Together with EzrA, is a key component of the system that regulates PBP1 localization during cell cycle progression. Its main role could be the removal of PBP1 from the cell pole after pole maturation is completed. Also contributes to the recruitment of PBP1 to the division complex. Not essential for septum formation. This chain is Cell cycle protein GpsB, found in Geobacillus kaustophilus (strain HTA426).